We begin with the raw amino-acid sequence, 245 residues long: 4-hydroxy-tetrahydrodipicolinate reductase (245 aa).

NAD(+) is bound by residues 7–12 (GAKGKV), 75–77 (GTT), and 102–105 (APNF). H132 serves as the catalytic Proton donor/acceptor. Position 133 (H133) interacts with (S)-2,3,4,5-tetrahydrodipicolinate. K136 (proton donor) is an active-site residue. 142–143 (GT) lines the (S)-2,3,4,5-tetrahydrodipicolinate pocket.

It belongs to the DapB family.

It localises to the cytoplasm. It catalyses the reaction (S)-2,3,4,5-tetrahydrodipicolinate + NAD(+) + H2O = (2S,4S)-4-hydroxy-2,3,4,5-tetrahydrodipicolinate + NADH + H(+). It carries out the reaction (S)-2,3,4,5-tetrahydrodipicolinate + NADP(+) + H2O = (2S,4S)-4-hydroxy-2,3,4,5-tetrahydrodipicolinate + NADPH + H(+). It participates in amino-acid biosynthesis; L-lysine biosynthesis via DAP pathway; (S)-tetrahydrodipicolinate from L-aspartate: step 4/4. Functionally, catalyzes the conversion of 4-hydroxy-tetrahydrodipicolinate (HTPA) to tetrahydrodipicolinate. The sequence is that of 4-hydroxy-tetrahydrodipicolinate reductase from Mycobacterium tuberculosis (strain ATCC 25177 / H37Ra).